Reading from the N-terminus, the 276-residue chain is MAD2L1-binding protein (276 aa).

Residues 1–10 (MAASGEEDMS) are compositionally biased toward acidic residues. The disordered stretch occupies residues 1–30 (MAASGEEDMSELSPAAAPNLDWYEKPEETH). Residues 49–81 (PAEPFCPRDLVPVVFPGPVSQEDCCQFTCELLK) form an interaction with MAD2L1 region.

The protein belongs to the MAD2L1BP family. Interacts with MAD2L1.

It localises to the nucleus. The protein localises to the nucleoplasm. It is found in the cytoplasm. Its subcellular location is the cytoskeleton. The protein resides in the spindle. Its function is as follows. May function to silence the spindle checkpoint and allow mitosis to proceed through anaphase by binding MAD2L1 after it has become dissociated from the MAD2L1-CDC20 complex. This chain is MAD2L1-binding protein (Mad2l1bp), found in Mus musculus (Mouse).